A 973-amino-acid chain; its full sequence is MCELNNKRVSWSKTGLIAYADEQSTYGNLCISFLETINGVNCRFHPPQRYVIHPQLHEVPLKTETGNGINGASGSSTAQSNIHGTTSVPGSAGKHQHQFFYDISSIHWNNWFSLPGDMLAVCDELGNMTMLIAGQSPDGPTTLDKLTMLFQDNVYKIHNHVMQLEPERENTDSKLERKKTKKEYNTTILDFHWLSSSKPVIVSQFCAFDSSINMYRNKAQQLSPHGIFHPPFMKYAGLAIRRNGQLDFWYQFSNSKDHKKITLQLFNPHNERSKGLDFLQYAKITSVNNDNSILITTYSRLTGKLSFYKLFVDWNVNTAKPVVLNDPSLKIKHILDATVDQTDDEGRILDFTHVHVLAKVVAEKDAAPEVLLAYDVVGTPESLIKRFKLGQVRLPLDYLGILKPELNTSNENHNQALRSNRSNLRFLGVLNLHHKVASISSEVLDGFVSFYYRNGEIEIYNQNDWKLETERLLNQGPQGKFSNIITSILSAGFKYPTIKNLGTVEWIRVSPAMAGILYKYRHDDLPQFQPMNIDDVSDKSKDEINAATMAFGYVTSAHRQLSGEDIALACKQHILKIAKIDEKRAKDFTTTLMFNLYNFFNFSPGAPKELMDKIISSRPLQKVMLLQLELGSIFTDENTCEMARVILYLKNVSFAFNGVARNLQFAIEQMTNSTNSSNPPLSGDKFFQTAFSKQDLVHSLIPVTKWFVKFITYLIQQILILTNDPENPDNRLVLGVFGAKIPRTLILTILKEIKNVTAIITKFPETNYPILNESSTYLKMLLIESPINFEKFETFLMDVNNKLSAFSEQQPSIMREPTLLVRSSVPNELNKITEFLLQYSSNTVISHADASAIYFSDTSGLRISCDEFFEPGVHRLLQPIEDGIVIDEKNMPATFRDSKTFTKLTYDGITYDRFSKEELSDNKLKRCNRCGAVTKAGYPIPTNKTIVPTSISTRRWPTMYTRMCICLGMLYEL.

It belongs to the Mediator complex subunit 16 family. Component of the Mediator complex.

It localises to the nucleus. Its function is as follows. Component of the Mediator complex, a coactivator involved in the regulated transcription of nearly all RNA polymerase II-dependent genes. Mediator functions as a bridge to convey information from gene-specific regulatory proteins to the basal RNA polymerase II transcription machinery. Mediator is recruited to promoters by direct interactions with regulatory proteins and serves as a scaffold for the assembly of a functional preinitiation complex with RNA polymerase II and the general transcription factors. This chain is Mediator of RNA polymerase II transcription subunit 16 (SIN4), found in Candida glabrata (strain ATCC 2001 / BCRC 20586 / JCM 3761 / NBRC 0622 / NRRL Y-65 / CBS 138) (Yeast).